The primary structure comprises 85 residues: MIKLFCVLAAFISINSACQSSHQQREEFTVATYHSSSICTTYCYSNCVVASQHKGLNVESYTCDKPDPYGRETVCKCTLIKCHDI.

Residues 1–20 form the signal peptide; that stretch reads MIKLFCVLAAFISINSACQS.

This is an uncharacterized protein from Invertebrate iridescent virus 6 (IIV-6).